Here is a 1406-residue protein sequence, read N- to C-terminus: Protein FAM135B (1406 aa).

2 disordered regions span residues 519–548 (WTGQTSDAGTYPVADVDTSRRSPGPEDGQA) and 770–820 (SVSA…GDSG). Phosphoserine is present on residues Ser-777 and Ser-778. Residues 804-816 (KSQGSPGSCSQLC) are compositionally biased toward polar residues.

The protein belongs to the FAM135 family.

This Homo sapiens (Human) protein is Protein FAM135B (FAM135B).